The sequence spans 137 residues: Oleosin Ara h 11.0101 (137 aa).

N-acetylalanine; alternate is present on Ala-2. A run of 2 helical transmembrane segments spans residues 27-47 (AVVA…GTVI) and 55-75 (LFVI…LLGL).

Belongs to the oleosin family. In terms of tissue distribution, expressed in seeds (at protein level).

It localises to the lipid droplet. The protein localises to the membrane. Its function is as follows. May have a structural role to stabilize the lipid body during desiccation of the seed by preventing coalescence of the oil. Probably interacts with both lipid and phospholipid moieties of lipid bodies. May also provide recognition signals for specific lipase anchorage in lipolysis during seedling growth. This Arachis hypogaea (Peanut) protein is Oleosin Ara h 11.0101.